The sequence spans 378 residues: D-galactarolactone cycloisomerase (378 aa).

Residues D194, E220, and E246 each contribute to the Mg(2+) site. H296 functions as the Proton acceptor in the catalytic mechanism.

It belongs to the mandelate racemase/muconate lactonizing enzyme family. Homooctamer. Requires Mg(2+) as cofactor.

The enzyme catalyses D-glucaro-1,4-lactone = 5-dehydro-4-deoxy-D-glucarate + H(+). It catalyses the reaction D-galactaro-1,4-lactone = 5-dehydro-4-deoxy-D-glucarate + H(+). The protein operates within carbohydrate acid metabolism; D-galacturonate degradation via prokaryotic oxidative pathway. Functionally, catalyzes the ring opening of D-galactaro-1,4-lactone to yield 5-keto-4-deoxy-D-glucarate (KDG) via a beta-elimination reaction. This is a step in the oxidative degradation pathway of D-galacturonate, which allows A.tumefaciens to utilize D-galacturonate as a sole carbon source. To a lesser extent, can also use D-glucaro-1,4-lactone as substrate to produce KDG, but cannot use D-galactaro-1,5-lactone, D-glucaro-6,3-lactone and linear D-glucarate. The chain is D-galactarolactone cycloisomerase (gci) from Agrobacterium fabrum (strain C58 / ATCC 33970) (Agrobacterium tumefaciens (strain C58)).